A 326-amino-acid polypeptide reads, in one-letter code: Regulation of nuclear pre-mRNA domain-containing protein 1B (326 aa).

Ser2 bears the N-acetylserine mark. The CID domain occupies 2-133 (SSFSESALEK…QLKLSMEDSK (132 aa)). The span at 128-144 (SMEDSKSPPPKAAEEKK) shows a compositional bias: basic and acidic residues. Residues 128 to 148 (SMEDSKSPPPKAAEEKKSLKR) are disordered. Residues Ser132 and Ser134 each carry the phosphoserine modification. At Tyr161 the chain carries Phosphotyrosine. 2 positions are modified to phosphoserine: Ser166 and Ser299.

Belongs to the UPF0400 (RTT103) family. Homodimer. May form a heterodimer with RPRD1A. Associates with RPAP2. Associates with the RNA polymerase II complex. Widely expressed in the adult with highest levels in liver, colon, prostate and uterus and lowest levels in heart and kidney. Not detected in rectum.

The protein localises to the nucleus. Interacts with phosphorylated C-terminal heptapeptide repeat domain (CTD) of the largest RNA polymerase II subunit POLR2A, and participates in dephosphorylation of the CTD by RPAP2. Transcriptional regulator which enhances expression of CCND1. Promotes binding of RNA polymerase II to the CCDN1 promoter and to the termination region before the poly-A site but decreases its binding after the poly-A site. Prevents RNA polymerase II from reading through the 3' end termination site and may allow it to be recruited back to the promoter through promotion of the formation of a chromatin loop. Also enhances the transcription of a number of other cell cycle-related genes including CDK2, CDK4, CDK6 and cyclin-E but not CDKN1A, CDKN1B or cyclin-A. Promotes cell proliferation. In Mus musculus (Mouse), this protein is Regulation of nuclear pre-mRNA domain-containing protein 1B (Rprd1b).